Consider the following 230-residue polypeptide: Flagellar L-ring protein (230 aa).

The first 21 residues, methionine 1–glycine 21, serve as a signal peptide directing secretion. The N-palmitoyl cysteine moiety is linked to residue cysteine 22. Cysteine 22 carries S-diacylglycerol cysteine lipidation. Residues proline 34–isoleucine 53 form a disordered region. The segment covering threonine 36–serine 46 has biased composition (pro residues).

It belongs to the FlgH family. The basal body constitutes a major portion of the flagellar organelle and consists of four rings (L,P,S, and M) mounted on a central rod.

It localises to the cell outer membrane. It is found in the bacterial flagellum basal body. Assembles around the rod to form the L-ring and probably protects the motor/basal body from shearing forces during rotation. This chain is Flagellar L-ring protein, found in Bordetella bronchiseptica (strain ATCC BAA-588 / NCTC 13252 / RB50) (Alcaligenes bronchisepticus).